The sequence spans 466 residues: Cysteine--tRNA ligase (466 aa).

Cys27 provides a ligand contact to Zn(2+). Residues 29–39 (PTVYNYFHIGN) carry the 'HIGH' region motif. 3 residues coordinate Zn(2+): Cys207, His232, and Glu236. The 'KMSKS' region motif lies at 264 to 268 (KMSKS). An ATP-binding site is contributed by Lys267.

The protein belongs to the class-I aminoacyl-tRNA synthetase family. In terms of assembly, monomer. The cofactor is Zn(2+).

It localises to the cytoplasm. The enzyme catalyses tRNA(Cys) + L-cysteine + ATP = L-cysteinyl-tRNA(Cys) + AMP + diphosphate. The chain is Cysteine--tRNA ligase from Clostridium novyi (strain NT).